Consider the following 233-residue polypeptide: N-(5'-phosphoribosyl)anthranilate isomerase (233 aa).

The protein belongs to the TrpF family.

It carries out the reaction N-(5-phospho-beta-D-ribosyl)anthranilate = 1-(2-carboxyphenylamino)-1-deoxy-D-ribulose 5-phosphate. It functions in the pathway amino-acid biosynthesis; L-tryptophan biosynthesis; L-tryptophan from chorismate: step 3/5. The sequence is that of N-(5'-phosphoribosyl)anthranilate isomerase from Synechococcus sp. (strain JA-2-3B'a(2-13)) (Cyanobacteria bacterium Yellowstone B-Prime).